The chain runs to 168 residues: Photosystem I assembly protein Ycf3 (168 aa).

3 TPR repeats span residues 35 to 68, 72 to 105, and 120 to 153; these read AFTY…EIDP, SYIL…NPFL, and GEQA…TPGN.

It belongs to the Ycf3 family.

Its subcellular location is the plastid. It is found in the chloroplast thylakoid membrane. Essential for the assembly of the photosystem I (PSI) complex. May act as a chaperone-like factor to guide the assembly of the PSI subunits. The sequence is that of Photosystem I assembly protein Ycf3 from Lemna minor (Common duckweed).